A 229-amino-acid polypeptide reads, in one-letter code: Potassium/proton antiporter CemA (229 aa).

The next 4 helical transmembrane spans lie at 11-31 (TTPF…SLFF), 118-138 (IISF…LVIL), 158-178 (LLAL…ELLI), and 190-210 (LLVC…TFNY).

It belongs to the CemA family.

It localises to the plastid. It is found in the chloroplast inner membrane. The catalysed reaction is K(+)(in) + H(+)(out) = K(+)(out) + H(+)(in). Functionally, contributes to K(+)/H(+) antiport activity by supporting proton efflux to control proton extrusion and homeostasis in chloroplasts in a light-dependent manner to modulate photosynthesis. Prevents excessive induction of non-photochemical quenching (NPQ) under continuous-light conditions. Indirectly promotes efficient inorganic carbon uptake into chloroplasts. The polypeptide is Potassium/proton antiporter CemA (Pelargonium hortorum (Common geranium)).